Reading from the N-terminus, the 452-residue chain is Phosphoglucosamine mutase (452 aa).

Serine 109 acts as the Phosphoserine intermediate in catalysis. Serine 109, aspartate 248, aspartate 250, and aspartate 252 together coordinate Mg(2+). Phosphoserine is present on serine 109.

The protein belongs to the phosphohexose mutase family. Requires Mg(2+) as cofactor. In terms of processing, activated by phosphorylation.

The catalysed reaction is alpha-D-glucosamine 1-phosphate = D-glucosamine 6-phosphate. Functionally, catalyzes the conversion of glucosamine-6-phosphate to glucosamine-1-phosphate. This Erythrobacter litoralis (strain HTCC2594) protein is Phosphoglucosamine mutase.